The following is a 242-amino-acid chain: Aspartate/glutamate leucyltransferase (242 aa).

The protein belongs to the R-transferase family. Bpt subfamily.

The protein resides in the cytoplasm. It catalyses the reaction N-terminal L-glutamyl-[protein] + L-leucyl-tRNA(Leu) = N-terminal L-leucyl-L-glutamyl-[protein] + tRNA(Leu) + H(+). The enzyme catalyses N-terminal L-aspartyl-[protein] + L-leucyl-tRNA(Leu) = N-terminal L-leucyl-L-aspartyl-[protein] + tRNA(Leu) + H(+). Functions in the N-end rule pathway of protein degradation where it conjugates Leu from its aminoacyl-tRNA to the N-termini of proteins containing an N-terminal aspartate or glutamate. The sequence is that of Aspartate/glutamate leucyltransferase from Alcanivorax borkumensis (strain ATCC 700651 / DSM 11573 / NCIMB 13689 / SK2).